Reading from the N-terminus, the 360-residue chain is Peptide chain release factor 1 (360 aa).

Glutamine 236 is modified (N5-methylglutamine).

Belongs to the prokaryotic/mitochondrial release factor family. Post-translationally, methylated by PrmC. Methylation increases the termination efficiency of RF1.

It is found in the cytoplasm. In terms of biological role, peptide chain release factor 1 directs the termination of translation in response to the peptide chain termination codons UAG and UAA. The polypeptide is Peptide chain release factor 1 (Limosilactobacillus reuteri subsp. reuteri (strain JCM 1112) (Lactobacillus reuteri)).